Reading from the N-terminus, the 1964-residue chain is Probable helicase with zinc finger domain (1964 aa).

The C3H1-type zinc finger occupies 178-206 (SEEYTLCKRFLEQGICRYGAQCTSAHSQE). At Ser-248 the chain carries Phosphoserine. Residue 668–675 (GPYGTGKT) coordinates ATP. The DEAA box motif lies at 794-797 (DEAA). Residues 1116–1127 (HSGNSSRQQQSP) are compositionally biased toward polar residues. The disordered stretch occupies residues 1116–1135 (HSGNSSRQQQSPPKVKSLYH). Phosphothreonine is present on Thr-1163. Arg-1245 is modified (omega-N-methylarginine). Disordered regions lie at residues 1248-1350 (PIPY…LPAP), 1360-1379 (HFHPLPQLPRPPFPASQPHT), 1388-1449 (LPEQ…QAGP), 1463-1491 (QSPAAEAVGPEQPPPPGLPDGHSPLRAIT), 1631-1655 (QVQPRSPPAVPSPPSSTDHSSQFAN), and 1743-1964 (QHAA…SYFK). 2 stretches are compositionally biased toward basic and acidic residues: residues 1268-1281 (HAEKDQQEQNRNGK) and 1292-1308 (NKIRTPEKKPTEPKQVD). Over residues 1365–1374 (PQLPRPPFPA) the composition is skewed to pro residues. Residues 1388–1431 (LPEQPNQMAPQPNQVAPQPNQMTPQPNQVAPQPNQVVQQQSQAP) are compositionally biased toward low complexity. Positions 1635 to 1644 (RSPPAVPSPP) are enriched in pro residues. Ser-1636, Ser-1760, Ser-1763, and Ser-1788 each carry phosphoserine. The span at 1755–1765 (SSRTVSASSLP) shows a compositional bias: polar residues. Composition is skewed to polar residues over residues 1799 to 1813 (PQDSLAQGKESQGHS) and 1826 to 1849 (WANTTSSAPYQNIPCNGSSRTSQP). A compositionally biased stretch (basic and acidic residues) spans 1860–1870 (KPPEDQLKPES). Polar residues-rich tracts occupy residues 1872-1881 (EVSSSFNYSM) and 1897-1910 (IAESANCSSQQSPA). Over residues 1941–1956 (PLSLLQELSLGSSPGS) the composition is skewed to low complexity.

The protein belongs to the DNA2/NAM7 helicase family. Interacts with POLR2A. Interacts with SMYD3; the interaction may bridge SMYD3 and RNA polymerase II. Interacts with SMYD2.

Its subcellular location is the nucleus. Its function is as follows. May act as a helicase that plays a role in RNA metabolism in multiple tissues and organs within the developing embryo. The sequence is that of Probable helicase with zinc finger domain (Helz) from Mus musculus (Mouse).